The sequence spans 362 residues: Biotin synthase (362 aa).

Residues 14–39 form a disordered region; sequence AQRTPEPLPPTSQGLARPSHDVVRGP. A Radical SAM core domain is found at 87–316; it reads HKGGPAALCG…ARDILVCGGR (230 aa). Positions 105, 109, and 112 each coordinate [4Fe-4S] cluster. 2 residues coordinate [2Fe-2S] cluster: cysteine 181 and cysteine 241.

The protein belongs to the radical SAM superfamily. Biotin synthase family. Homodimer. Requires [4Fe-4S] cluster as cofactor. It depends on [2Fe-2S] cluster as a cofactor.

The catalysed reaction is (4R,5S)-dethiobiotin + (sulfur carrier)-SH + 2 reduced [2Fe-2S]-[ferredoxin] + 2 S-adenosyl-L-methionine = (sulfur carrier)-H + biotin + 2 5'-deoxyadenosine + 2 L-methionine + 2 oxidized [2Fe-2S]-[ferredoxin]. It participates in cofactor biosynthesis; biotin biosynthesis; biotin from 7,8-diaminononanoate: step 2/2. Functionally, catalyzes the conversion of dethiobiotin (DTB) to biotin by the insertion of a sulfur atom into dethiobiotin via a radical-based mechanism. This is Biotin synthase from Nitratidesulfovibrio vulgaris (strain ATCC 29579 / DSM 644 / CCUG 34227 / NCIMB 8303 / VKM B-1760 / Hildenborough) (Desulfovibrio vulgaris).